We begin with the raw amino-acid sequence, 547 residues long: Tripartite motif-containing protein 5 (547 aa).

Residue alanine 2 is modified to N-acetylalanine. The RING-type zinc-finger motif lies at 15-59; that stretch reads CPICLELLTEPLSLDCGHSFCQACITANHKESTLHQGERSCPLCR. The residue at position 86 (serine 86) is a Phosphoserine. The B box-type zinc-finger motif lies at 91-132; it reads QKVDRCARHGEKLLLFCQQHGNVICWLCERSQEHRGHSTFLV. Residues cysteine 96, histidine 99, cysteine 118, and histidine 124 each coordinate Zn(2+). Positions 132–225 form a coiled coil; it reads VEEVAQKYQE…AQSENDMVLQ (94 aa). The interval 186–199 is required for interaction with GABARAP and for autophagy; that stretch reads FKQLRDILDCEESN. The 268-residue stretch at 280–547 folds into the B30.2/SPRY domain; it reads PDLKGMLQVF…LPMTLCSPSS (268 aa).

The protein belongs to the TRIM/RBCC family. Can form homodimers and homotrimers. In addition to lower-order dimerization, also exhibits a higher-order multimerization and both low- and high-order multimerizations are essential for its restriction activity. Interacts with BTBD1 and BTBD2. Interacts with PSMC4, PSMC5, PSMD7 and HSPA8/HSC70. Interacts (via B30.2/SPRY domain) with HSPA1A/B. Interacts with PSMC2, MAP3K7/TAK1, TAB2 and TAB3. Interacts with SQSTM1. Interacts with TRIM6 and TRIM34. Interacts with ULK1 (phosphorylated form), GABARAP, GABARAPL1, GABARAPL2, MAP1LC3A, MAP1LC3C and BECN1. In terms of processing, degraded in a proteasome-independent fashion in the absence of viral infection but in a proteasome-dependent fashion following exposure to restriction sensitive virus. Autoubiquitinated in a RING finger- and UBE2D2-dependent manner. Monoubiquitinated by TRIM21. Deubiquitinated by Yersinia YopJ. Ubiquitination may not lead to proteasomal degradation.

The protein resides in the cytoplasm. The protein localises to the nucleus. The enzyme catalyses S-ubiquitinyl-[E2 ubiquitin-conjugating enzyme]-L-cysteine + [acceptor protein]-L-lysine = [E2 ubiquitin-conjugating enzyme]-L-cysteine + N(6)-ubiquitinyl-[acceptor protein]-L-lysine.. The protein operates within protein modification; protein ubiquitination. In terms of biological role, capsid-specific restriction factor that prevents infection from non-host-adapted retroviruses. Blocks viral replication early in the life cycle, after viral entry but before reverse transcription. In addition to acting as a capsid-specific restriction factor, also acts as a pattern recognition receptor that activates innate immune signaling in response to the retroviral capsid lattice. Binding to the viral capsid triggers its E3 ubiquitin ligase activity, and in concert with the heterodimeric ubiquitin conjugating enzyme complex UBE2V1-UBE2N (also known as UBC13-UEV1A complex) generates 'Lys-63'-linked polyubiquitin chains, which in turn are catalysts in the autophosphorylation of the MAP3K7/TAK1 complex (includes TAK1, TAB2, and TAB3). Activation of the MAP3K7/TAK1 complex by autophosphorylation results in the induction and expression of NF-kappa-B and MAPK-responsive inflammatory genes, thereby leading to an innate immune response in the infected cell. Plays a role in regulating autophagy through activation of autophagy regulator BECN1 by causing its dissociation from its inhibitors BCL2 and TAB2. This is Tripartite motif-containing protein 5 (TRIM5) from Ateles geoffroyi (Black-handed spider monkey).